The primary structure comprises 151 residues: Histone H2B.1 (151 aa).

2 stretches are compositionally biased toward basic and acidic residues: residues 1 to 28 (MAPKAEKKPAAKKPAEEEPATEKVEKAP) and 36 to 51 (EKRLPAGKSKEGGEGK). The interval 1–58 (MAPKAEKKPAAKKPAEEEPATEKVEKAPAGKKPKAEKRLPAGKSKEGGEGKKGKKKAK) is disordered. N6-acetyllysine occurs at positions 7 and 37. Lys-147 participates in a covalent cross-link: Glycyl lysine isopeptide (Lys-Gly) (interchain with G-Cter in ubiquitin).

It belongs to the histone H2B family. As to quaternary structure, the nucleosome is a histone octamer containing two molecules each of H2A, H2B, H3 and H4 assembled in one H3-H4 heterotetramer and two H2A-H2B heterodimers. The octamer wraps approximately 147 bp of DNA. Post-translationally, can be acetylated to form H2BK6ac and H2BK33ac. In terms of processing, monoubiquitinated to form H2BK143ub1; may give a specific tag for epigenetic transcriptional activation.

The protein resides in the nucleus. Its subcellular location is the chromosome. Functionally, core component of nucleosome. Nucleosomes wrap and compact DNA into chromatin, limiting DNA accessibility to the cellular machineries which require DNA as a template. Histones thereby play a central role in transcription regulation, DNA repair, DNA replication and chromosomal stability. DNA accessibility is regulated via a complex set of post-translational modifications of histones, also called histone code, and nucleosome remodeling. This is Histone H2B.1 from Zea mays (Maize).